The chain runs to 309 residues: Postacrosomal sheath WW domain-binding protein (309 aa).

The region spanning 45–87 is the GRAM domain; sequence GRKTGTLFLTSYRVIFITSCSISDPMLSFMMPFDLMTNLTVEQ. 10 tandem repeats follow at residues 175 to 181, 182 to 188, 189 to 195, 217 to 223, 224 to 230, 231 to 237, 238 to 244, 245 to 251, 252 to 258, and 259 to 265. Positions 175–265 are 10 X 7 AA tandem repeat of Y-G-X-P-P-X-G; it reads YGAPPAGYGA…PLGYGAPPAG (91 aa). The short motif at 186-189 is the PPxY motif element; it reads PPGY. The span at 251-272 shows a compositional bias: low complexity; the sequence is GYGAPPLGYGAPPAGNEGPPAG. The tract at residues 251–309 is disordered; it reads GYGAPPLGYGAPPAGNEGPPAGYRASPAGSGARPQESTAAQAPENEASLPSASSSQVHS. Over residues 298–309 the composition is skewed to polar residues; it reads SLPSASSSQVHS.

Expressed in testis.

Functionally, may play a role in meiotic resumption and pronuclear formation, mediated by a WW domain-signaling pathway during fertilization. This is Postacrosomal sheath WW domain-binding protein (WBP2NL) from Homo sapiens (Human).